An 84-amino-acid chain; its full sequence is Cell division topological specificity factor (84 aa).

Belongs to the MinE family.

Its function is as follows. Prevents the cell division inhibition by proteins MinC and MinD at internal division sites while permitting inhibition at polar sites. This ensures cell division at the proper site by restricting the formation of a division septum at the midpoint of the long axis of the cell. In Paraburkholderia phymatum (strain DSM 17167 / CIP 108236 / LMG 21445 / STM815) (Burkholderia phymatum), this protein is Cell division topological specificity factor.